Here is a 486-residue protein sequence, read N- to C-terminus: F-box protein At1g80960 (486 aa).

The region spanning 49 to 97 is the F-box domain; that stretch reads VDWISKLPDDVLLIILSRLSTEEAIRTSVVSKRWEHVWNQMSHLVFDMR.

The polypeptide is F-box protein At1g80960 (Arabidopsis thaliana (Mouse-ear cress)).